Consider the following 573-residue polypeptide: 2-isopropylmalate synthase (573 aa).

Residues 37-314 (PRWLSTDLRD…DPQIDFSNID (278 aa)) form the Pyruvate carboxyltransferase domain. Aspartate 46, histidine 253, histidine 255, and asparagine 289 together coordinate Mg(2+). The interval 456–573 (NPRNPWGRIQ…VVSAVNRAAR (118 aa)) is regulatory domain.

Belongs to the alpha-IPM synthase/homocitrate synthase family. LeuA type 2 subfamily. In terms of assembly, homodimer. It depends on Mg(2+) as a cofactor.

Its subcellular location is the cytoplasm. It catalyses the reaction 3-methyl-2-oxobutanoate + acetyl-CoA + H2O = (2S)-2-isopropylmalate + CoA + H(+). The protein operates within amino-acid biosynthesis; L-leucine biosynthesis; L-leucine from 3-methyl-2-oxobutanoate: step 1/4. Catalyzes the condensation of the acetyl group of acetyl-CoA with 3-methyl-2-oxobutanoate (2-ketoisovalerate) to form 3-carboxy-3-hydroxy-4-methylpentanoate (2-isopropylmalate). In Streptomyces avermitilis (strain ATCC 31267 / DSM 46492 / JCM 5070 / NBRC 14893 / NCIMB 12804 / NRRL 8165 / MA-4680), this protein is 2-isopropylmalate synthase.